The following is a 43-amino-acid chain: Protein PsbN (43 aa).

Residues 7-29 form a helical membrane-spanning segment; it reads LSIALAAVCIGVTGYSIYLSFGP.

It belongs to the PsbN family.

The protein resides in the cellular thylakoid membrane. Functionally, may play a role in photosystem I and II biogenesis. This is Protein PsbN from Thermosynechococcus vestitus (strain NIES-2133 / IAM M-273 / BP-1).